Reading from the N-terminus, the 281-residue chain is MANPWWTNQSGLAGMVDHSVSSGHHQNHHHQSLLTKGDLGIAMNQSQDNDQDEEDDPREGAVEVVNRRPRGRPPGSKNKPKAPIFVTRDSPNALRSHVLEISDGSDVADTIAHFSRRRQRGVCVLSGTGSVANVTLRQAAAPGGVVSLQGRFEILSLTGAFLPGPSPPGSTGLTVYLAGVQGQVVGGSVVGPLLAIGSVMVIAATFSNATYERLPMEEEEDGGGSRQIHGGGDSPPRIGSNLPDLSGMAGPGYNMPPHLIPNGAGQLGHEPYTWVHARPPY.

Disordered stretches follow at residues 43 to 85 (MNQS…APIF) and 216 to 247 (MEEE…DLSG). Positions 67 to 79 (RRPRGRPPGSKNK) form a DNA-binding region, a.T hook. One can recognise a PPC domain in the interval 91-229 (PNALRSHVLE…EDGGGSRQIH (139 aa)).

The protein localises to the nucleus. Its function is as follows. Transcription factor that specifically binds AT-rich DNA sequences related to the nuclear matrix attachment regions (MARs). Negatively regulates plant innate immunity (PTI) to pathogens through the down-regulation of the PAMP-triggered NHO1 and FRK1 expression. The chain is AT-hook motif nuclear-localized protein 20 from Arabidopsis thaliana (Mouse-ear cress).